The chain runs to 688 residues: Elongation factor G (688 aa).

In terms of domain architecture, tr-type G spans 8–282; the sequence is INFRNFGIMA…AVVDFLPSPV (275 aa). Residues 17–24, 81–85, and 135–138 contribute to the GTP site; these read AHIDAGKT, DTPGH, and NKMD.

Belongs to the TRAFAC class translation factor GTPase superfamily. Classic translation factor GTPase family. EF-G/EF-2 subfamily.

It localises to the cytoplasm. Catalyzes the GTP-dependent ribosomal translocation step during translation elongation. During this step, the ribosome changes from the pre-translocational (PRE) to the post-translocational (POST) state as the newly formed A-site-bound peptidyl-tRNA and P-site-bound deacylated tRNA move to the P and E sites, respectively. Catalyzes the coordinated movement of the two tRNA molecules, the mRNA and conformational changes in the ribosome. The polypeptide is Elongation factor G (fusA) (Mycoplasma pneumoniae (strain ATCC 29342 / M129 / Subtype 1) (Mycoplasmoides pneumoniae)).